A 158-amino-acid chain; its full sequence is GTP-dependent dephospho-CoA kinase (158 aa).

GTP-binding residues include aspartate 35, valine 36, aspartate 54, lysine 56, glutamate 109, and aspartate 132.

The protein belongs to the GTP-dependent DPCK family.

It carries out the reaction 3'-dephospho-CoA + GTP = GDP + CoA + H(+). Its pathway is cofactor biosynthesis; coenzyme A biosynthesis. Functionally, catalyzes the GTP-dependent phosphorylation of the 3'-hydroxyl group of dephosphocoenzyme A to form coenzyme A (CoA). The sequence is that of GTP-dependent dephospho-CoA kinase from Methanococcus maripaludis (strain C5 / ATCC BAA-1333).